A 634-amino-acid chain; its full sequence is Coilin (634 aa).

Disordered stretches follow at residues 87 to 135 (VSPA…IAEN), 149 to 276 (PGPS…KLSQ), and 342 to 361 (GAKSDDTAKQFPSNGKDSTL). Polar residues predominate over residues 152 to 181 (SVQSKLLTNKGTPKAPETQTEVSNMSANIE). 2 stretches are compositionally biased toward basic and acidic residues: residues 223-234 (TLKEGKMSESKN) and 251-272 (KENETREEQQDKTHLESNKIPD).

It belongs to the coilin family. In egg chambers expressed in the follicle cells, nurse cells and oocyte. Expressed in the larval brain, salivary glands, fat bodies and in the somatic hub cells at the tip of the testis. Expressed in the spermatogonia and spermatocytes, and in the adult ejaculatory duct (at protein level). Expressed in the adult Malpighian tubules.

It localises to the nucleus. It is found in the nucleoplasm. The protein localises to the cajal body. Its subcellular location is the chromosome. The protein resides in the centromere. It localises to the cytoplasm. It is found in the cytoskeleton. The protein localises to the spindle. Component of nuclear coiled bodies, also known as Cajal bodies or CBs, which are involved in the modification and assembly of nucleoplasmic snRNPs. Required for Cajal body formation. This chain is Coilin, found in Drosophila melanogaster (Fruit fly).